Here is a 139-residue protein sequence, read N- to C-terminus: Large ribosomal subunit protein uL16 (139 aa).

This sequence belongs to the universal ribosomal protein uL16 family. In terms of assembly, part of the 50S ribosomal subunit.

Binds 23S rRNA and is also seen to make contacts with the A and possibly P site tRNAs. This chain is Large ribosomal subunit protein uL16, found in Parvibaculum lavamentivorans (strain DS-1 / DSM 13023 / NCIMB 13966).